The following is a 287-amino-acid chain: Universal stress protein Slr1230 (287 aa).

Belongs to the universal stress protein A family.

In Synechocystis sp. (strain ATCC 27184 / PCC 6803 / Kazusa), this protein is Universal stress protein Slr1230.